Consider the following 277-residue polypeptide: Undecaprenyl-diphosphatase (277 aa).

5 consecutive transmembrane segments (helical) span residues 85-105 (VNIVVAFLPAALLGLVFAGAI), 109-129 (LFAPVPVAIAFIVGGFVILWV), 188-208 (ATEFSFFLAIPTLMGATVYSV), 218-238 (ADIPLFGLGGLAAFFSAFLCV), and 256-276 (YRIGFGLFVLLSAHYGWVVWA).

It belongs to the UppP family.

It is found in the cell inner membrane. It catalyses the reaction di-trans,octa-cis-undecaprenyl diphosphate + H2O = di-trans,octa-cis-undecaprenyl phosphate + phosphate + H(+). Catalyzes the dephosphorylation of undecaprenyl diphosphate (UPP). Confers resistance to bacitracin. This Herminiimonas arsenicoxydans protein is Undecaprenyl-diphosphatase.